The following is a 226-amino-acid chain: GTP-binding nuclear protein Ran-3 (226 aa).

The Small GTPase Ran-type domain maps to 14–178 (GYPSFKLILV…LYLARKLTGD (165 aa)). Residue 25–32 (DGGTGKTT) participates in GTP binding. Residues 44-52 (KRYEPTIGV) form a switch-I region. GTP is bound by residues glycine 75, 129 to 132 (NKVD), and 157 to 159 (SAK). The segment at 75-91 (GQEKFGGLRDGYYIHGH) is switch-II.

Belongs to the small GTPase superfamily. Ran family. Found in a nuclear export complex with RanGTP, exportin and pre-miRNA.

The protein localises to the nucleus. In terms of biological role, GTP-binding protein involved in nucleocytoplasmic transport. Required for the import of protein into the nucleus and also for RNA export. Involved in chromatin condensation and control of cell cycle. The polypeptide is GTP-binding nuclear protein Ran-3 (RAN3) (Oryza sativa subsp. indica (Rice)).